The chain runs to 405 residues: MAINTPLTNSWLDEFPARIAELDRAHLRRRRRVVVPEDGAHLQVDGQRMLAFCSNDYLGLAGHPALVQAACDGARAFGVGAAASPLVSGHSAANEALEAALARFVGQPRALYFYAGYATNIGIVPALVGKGDAIFSDALNHACLIDGARLSSAQIHRYPHADLAALEQELISSPARRKLIISDAVFSMDGDVADVPALLALCERHDALLLLDDAHGFGVLGPQGRGCLAHFGLSGENASPRVLYMATLGKAAGVAGAFVAGSEALVEWLLQKTRSYIFATAAPALLATALQTSLQLIEQDEWRREHLQRLIARLRSGLAQGLQGSSWRLGESPTAIQPVVIGPNDAALAVMEGLRTRGLWVPAIRPPTVAEGTARLRIALSAAHTEADIDRLVQALTELAKPGSL.

Arg-29 is a substrate binding site. Gly-116–Tyr-117 is a binding site for pyridoxal 5'-phosphate. Residue His-141 participates in substrate binding. Pyridoxal 5'-phosphate is bound by residues Ser-187, His-215, and Thr-247. N6-(pyridoxal phosphate)lysine is present on Lys-250. Thr-368 serves as a coordination point for substrate.

It belongs to the class-II pyridoxal-phosphate-dependent aminotransferase family. BioF subfamily. Homodimer. It depends on pyridoxal 5'-phosphate as a cofactor.

It carries out the reaction 6-carboxyhexanoyl-[ACP] + L-alanine + H(+) = (8S)-8-amino-7-oxononanoate + holo-[ACP] + CO2. Its pathway is cofactor biosynthesis; biotin biosynthesis. Functionally, catalyzes the decarboxylative condensation of pimeloyl-[acyl-carrier protein] and L-alanine to produce 8-amino-7-oxononanoate (AON), [acyl-carrier protein], and carbon dioxide. This is 8-amino-7-oxononanoate synthase 1 from Polaromonas sp. (strain JS666 / ATCC BAA-500).